Reading from the N-terminus, the 126-residue chain is Small ribosomal subunit protein uS12 (126 aa).

Position 89 is a 3-methylthioaspartic acid (D89).

It belongs to the universal ribosomal protein uS12 family. Part of the 30S ribosomal subunit. Contacts proteins S8 and S17. May interact with IF1 in the 30S initiation complex.

Its function is as follows. With S4 and S5 plays an important role in translational accuracy. Interacts with and stabilizes bases of the 16S rRNA that are involved in tRNA selection in the A site and with the mRNA backbone. Located at the interface of the 30S and 50S subunits, it traverses the body of the 30S subunit contacting proteins on the other side and probably holding the rRNA structure together. The combined cluster of proteins S8, S12 and S17 appears to hold together the shoulder and platform of the 30S subunit. The protein is Small ribosomal subunit protein uS12 of Sulfurimonas denitrificans (strain ATCC 33889 / DSM 1251) (Thiomicrospira denitrificans (strain ATCC 33889 / DSM 1251)).